The following is a 226-amino-acid chain: Enolase-phosphatase E1 (226 aa).

The protein belongs to the HAD-like hydrolase superfamily. MasA/MtnC family. As to quaternary structure, monomer. The cofactor is Mg(2+).

It catalyses the reaction 5-methylsulfanyl-2,3-dioxopentyl phosphate + H2O = 1,2-dihydroxy-5-(methylsulfanyl)pent-1-en-3-one + phosphate. It functions in the pathway amino-acid biosynthesis; L-methionine biosynthesis via salvage pathway; L-methionine from S-methyl-5-thio-alpha-D-ribose 1-phosphate: step 3/6. It participates in amino-acid biosynthesis; L-methionine biosynthesis via salvage pathway; L-methionine from S-methyl-5-thio-alpha-D-ribose 1-phosphate: step 4/6. Bifunctional enzyme that catalyzes the enolization of 2,3-diketo-5-methylthiopentyl-1-phosphate (DK-MTP-1-P) into the intermediate 2-hydroxy-3-keto-5-methylthiopentenyl-1-phosphate (HK-MTPenyl-1-P), which is then dephosphorylated to form the acireductone 1,2-dihydroxy-3-keto-5-methylthiopentene (DHK-MTPene). The chain is Enolase-phosphatase E1 from Shewanella baltica (strain OS155 / ATCC BAA-1091).